The primary structure comprises 86 residues: Large ribosomal subunit protein bL31B (86 aa).

This sequence belongs to the bacterial ribosomal protein bL31 family. Type B subfamily. Part of the 50S ribosomal subunit.

This chain is Large ribosomal subunit protein bL31B, found in Streptococcus equi subsp. zooepidemicus (strain H70).